The chain runs to 391 residues: Multidrug resistance protein MdtL (391 aa).

12 helical membrane passes run 4 to 24, 42 to 62, 69 to 89, 93 to 113, 134 to 154, 158 to 178, 203 to 222, 245 to 265, 269 to 289, 293 to 313, 331 to 351, and 356 to 376; these read FLICSFALVLLYPAGIDMYLV, IAFSVYLAGMAAAMLFAGKVA, PVAIPGAALFIIASVFCSLAE, LFLAGRFLQGLGAGCCYVVAF, GITCIIPVLAPVLGHLIMLNF, SLFWTMAIMGVAVLMLSLFIL, FFLSRVVITTLSVSVILTFV, ALTAGVSMTVSFSTPFALGIF, TLMITSQVLFLAAGITLAVSP, VSLFGITLICAGFSVGFGVAM, LGIAQVCGSSLWIWLAAVVGI, and MLIGILIACSIVSLLLIMFVA.

This sequence belongs to the major facilitator superfamily. DHA1 family. MdtL (TC 2.A.1.2.22) subfamily.

The protein resides in the cell inner membrane. Functionally, confers resistance to chloramphenicol. This is Multidrug resistance protein MdtL from Escherichia coli O81 (strain ED1a).